The primary structure comprises 815 residues: uncharacterized protein (815 aa).

4 disordered regions span residues 123–183, 249–274, 592–668, and 765–815; these read QSNT…QPST, NVNNNKNNKNQNNNNNNNIENSNNTN, IKQN…NLNS, and NNEE…EEIK. Polar residues-rich tracts occupy residues 135-154 and 174-183; these read SIITNSDSPRLIVSDTTSTT and DSITVLQPST. Positions 595-611 are enriched in low complexity; the sequence is NGSSSSNNNSKLSSTNS. The span at 612-639 shows a compositional bias: polar residues; the sequence is GQTSDNPINSSNGGQSIKKQGSNLSLNR. A compositionally biased stretch (low complexity) spans 640 to 668; that stretch reads QQSSTKLNNQSNNNNNNNANTTNQNNLNS. A compositionally biased stretch (basic and acidic residues) spans 765-782; the sequence is NNEEHNNNNKENNNENNK. Residues 783–809 are compositionally biased toward low complexity; sequence ENINNNNNIINNNNDNNCNENNNNCNE.

This is an uncharacterized protein from Dictyostelium discoideum (Social amoeba).